The primary structure comprises 91 residues: Small ribosomal subunit protein uS19 (91 aa).

This sequence belongs to the universal ribosomal protein uS19 family.

Protein S19 forms a complex with S13 that binds strongly to the 16S ribosomal RNA. This is Small ribosomal subunit protein uS19 from Marinobacter nauticus (strain ATCC 700491 / DSM 11845 / VT8) (Marinobacter aquaeolei).